Reading from the N-terminus, the 652-residue chain is MSQIHKHPIPAAIAEHALITPEKYQHYYQQSVQNPDEFWGEQGKIIDWIKPYKTVKNTSFDPGHVSIRWFEDGTLNLAANCLDRHLAERGDQTAIIWEGDDPNQSKTVTYKQLHHDVCQFANVLKSLGIKKGDVVAIYMPMVPEAAVAMLACARIGAVHSVIFGGFSPDAVAGRIIDSHSKLVITADEGIRAGRAIPLKKNVDEALKNPAITSIKNVVVFQRTGNASYWEDGRDVWWHDLIKEASADCPPEEMNAEDPLFILYTSGSTGKPKGVVHTTGGYLVYAALTFKYVFDYHPGDIYWCTADVGWVTGHSYLLYGPLACGAITLMFEGVPNYPGVNRLSQVVDKHKVNILYTAPTAIRALMAEGDKAIEGTKRDSLRIMGSVGEPINPEAWEWYYNKIGNSKCPIVDTWWQTETGGFMITPLPGATELKAGSATRPFFGVQPALVDNLGNPQEGVAEGNLVITDSWPGQARTLFGDHDRFEQTYFSTFKGMYFSGDGARRDEDGYYWITGRVDDVLNVSGHRLGTAEIESALVAHPKIAEAAVVGVPHNIKGQAIYAYITLNHGEEPTPELYTEVRNWVRKEIGPLATPDILHWTDSLPKTRSGKIMRRILRKIATGDTSNLGDTSTLADPSVVEKLLEEKQSMQTPS.

CoA is bound by residues 191 to 194 (RAGR), Thr-311, and Asn-335. ATP is bound by residues 387–389 (GEP), 411–416 (DTWWQT), Asp-500, and Arg-515. Ser-523 contacts CoA. Arg-526 serves as a coordination point for ATP. Mg(2+) contacts are provided by Val-537, His-539, and Ile-542. Position 584 (Arg-584) interacts with CoA. Lys-609 carries the post-translational modification N6-acetyllysine.

Belongs to the ATP-dependent AMP-binding enzyme family. Mg(2+) is required as a cofactor. Acetylated. Deacetylation by the SIR2-homolog deacetylase activates the enzyme.

The catalysed reaction is acetate + ATP + CoA = acetyl-CoA + AMP + diphosphate. Functionally, catalyzes the conversion of acetate into acetyl-CoA (AcCoA), an essential intermediate at the junction of anabolic and catabolic pathways. Acs undergoes a two-step reaction. In the first half reaction, Acs combines acetate with ATP to form acetyl-adenylate (AcAMP) intermediate. In the second half reaction, it can then transfer the acetyl group from AcAMP to the sulfhydryl group of CoA, forming the product AcCoA. Its function is as follows. Enables the cell to use acetate during aerobic growth to generate energy via the TCA cycle, and biosynthetic compounds via the glyoxylate shunt. Acetylates CheY, the response regulator involved in flagellar movement and chemotaxis. The sequence is that of Acetyl-coenzyme A synthetase from Yersinia pseudotuberculosis serotype I (strain IP32953).